Here is a 253-residue protein sequence, read N- to C-terminus: MRILLSNDDGIHAPGIQTLAKSLREFAEVQVVAPDRNRSGASNSLTLETPLRTFNYPNGDIAVQMGTPTDCVYLGVNALMRPMPDIVVSGINAGPNLGDDVIYSGTVAAAMEGRHLGLPALAVSLDGYQHYDTAAAVTCSILKALLREPLRTGRILNINVPDLPLDQIKGIRVTRCGSRHPSSQAIAQQDPRGNTLYWIGPPGEKLDAGPDTDFAAVDEGYVSVTALHVDLTAHAAQQVVSSWLASAEVTREW.

Asp8, Asp9, Ser39, and Asn92 together coordinate a divalent metal cation.

It belongs to the SurE nucleotidase family. It depends on a divalent metal cation as a cofactor.

The protein localises to the cytoplasm. It catalyses the reaction a ribonucleoside 5'-phosphate + H2O = a ribonucleoside + phosphate. The catalysed reaction is a ribonucleoside 3'-phosphate + H2O = a ribonucleoside + phosphate. It carries out the reaction [phosphate](n) + H2O = [phosphate](n-1) + phosphate + H(+). Functionally, nucleotidase with a broad substrate specificity as it can dephosphorylate various ribo- and deoxyribonucleoside 5'-monophosphates and ribonucleoside 3'-monophosphates with highest affinity to 3'-AMP. Also hydrolyzes polyphosphate (exopolyphosphatase activity) with the preference for short-chain-length substrates (P20-25). Might be involved in the regulation of dNTP and NTP pools, and in the turnover of 3'-mononucleotides produced by numerous intracellular RNases (T1, T2, and F) during the degradation of various RNAs. This Erwinia tasmaniensis (strain DSM 17950 / CFBP 7177 / CIP 109463 / NCPPB 4357 / Et1/99) protein is 5'/3'-nucleotidase SurE.